The chain runs to 258 residues: Putative gamma-secretase subunit APH-1C (258 aa).

The next 7 membrane-spanning stretches (helical) occupy residues 5–25, 32–52, 71–91, 116–136, 161–181, 187–207, and 214–234; these read VFFG…LFTI, VIFL…SSMF, LLIF…LAYY, LLAY…SFVN, AFMT…FFDG, WYTL…TFLS, and LVTA…VAGG.

It belongs to the APH-1 family. In terms of assembly, potential component of the gamma-secretase complex.

It localises to the membrane. Its function is as follows. Potential subunit of the gamma-secretase complex, an endoprotease complex that catalyzes the intramembrane cleavage of integral proteins such as Notch receptors and APP (amyloid-beta precursor protein). This Mus musculus (Mouse) protein is Putative gamma-secretase subunit APH-1C (Aph1c).